A 390-amino-acid polypeptide reads, in one-letter code: Digeranylgeranylglycerophospholipid reductase (390 aa).

Residues Ala-18, Glu-37, Cys-48, Ala-49, Ala-51, Arg-98, Val-122, Asp-278, Gly-290, and Ile-291 each coordinate FAD. Residue Val-368 coordinates a 2,3-bis-O-(geranylgeranyl)-sn-glycerol 1-phospholipid.

This sequence belongs to the geranylgeranyl reductase family. DGGGPL reductase subfamily. FAD serves as cofactor.

It carries out the reaction a 2,3-bis-O-phytanyl-sn-glycerol 1-phospholipid + 8 A = a 2,3-bis-O-(geranylgeranyl)-sn-glycerol 1-phospholipid + 8 AH2. The enzyme catalyses 2,3-bis-O-(phytanyl)-sn-glycerol 1-phosphate + 8 A = 2,3-bis-O-(geranylgeranyl)-sn-glycerol 1-phosphate + 8 AH2. The catalysed reaction is CDP-2,3-bis-O-(geranylgeranyl)-sn-glycerol + 8 AH2 = CDP-2,3-bis-O-(phytanyl)-sn-glycerol + 8 A. It catalyses the reaction archaetidylserine + 8 AH2 = 2,3-bis-O-phytanyl-sn-glycero-3-phospho-L-serine + 8 A. The protein operates within membrane lipid metabolism; glycerophospholipid metabolism. Is involved in the reduction of 2,3-digeranylgeranylglycerophospholipids (unsaturated archaeols) into 2,3-diphytanylglycerophospholipids (saturated archaeols) in the biosynthesis of archaeal membrane lipids. Catalyzes the formation of archaetidic acid (2,3-di-O-phytanyl-sn-glyceryl phosphate) from 2,3-di-O-geranylgeranylglyceryl phosphate (DGGGP) via the hydrogenation of each double bond of the isoprenoid chains. Is also probably able to reduce double bonds of geranyl groups in CDP-2,3-bis-O-(geranylgeranyl)-sn-glycerol and archaetidylserine, thus acting at various stages in the biosynthesis of archaeal membrane lipids. The sequence is that of Digeranylgeranylglycerophospholipid reductase from Methanococcus vannielii (strain ATCC 35089 / DSM 1224 / JCM 13029 / OCM 148 / SB).